The primary structure comprises 890 residues: Protein translocase subunit SecA (890 aa).

ATP contacts are provided by residues Gln-86, 104–108 (GEGKT), and Asp-493. Positions 851–872 (EASHGDGDAKKAPVVKKEESGR) are enriched in basic and acidic residues. Positions 851-873 (EASHGDGDAKKAPVVKKEESGRN) are disordered. Zn(2+)-binding residues include Cys-876, Cys-878, Cys-887, and Cys-888.

Belongs to the SecA family. Monomer and homodimer. Part of the essential Sec protein translocation apparatus which comprises SecA, SecYEG and auxiliary proteins SecDF. Other proteins may also be involved. Zn(2+) is required as a cofactor.

It localises to the cell membrane. The protein localises to the cytoplasm. The catalysed reaction is ATP + H2O + cellular proteinSide 1 = ADP + phosphate + cellular proteinSide 2.. In terms of biological role, part of the Sec protein translocase complex. Interacts with the SecYEG preprotein conducting channel. Has a central role in coupling the hydrolysis of ATP to the transfer of proteins into and across the cell membrane, serving as an ATP-driven molecular motor driving the stepwise translocation of polypeptide chains across the membrane. This chain is Protein translocase subunit SecA, found in Alkaliphilus oremlandii (strain OhILAs) (Clostridium oremlandii (strain OhILAs)).